An 815-amino-acid polypeptide reads, in one-letter code: Protein-glutamine gamma-glutamyltransferase K (815 aa).

Basic and acidic residues predominate over residues 1–10; the sequence is MEGPRSDVGR. 2 disordered regions span residues 1 to 48 and 62 to 101; these read MEGP…SFWA and DDWG…AAGD. A compositionally biased stretch (pro residues) spans 16–25; that stretch reads WQPPTTPSPE. T21 is modified (phosphothreonine). S23, S71, S83, S91, and S94 each carry phosphoserine. Residues 66 to 78 are compositionally biased toward low complexity; it reads PEPSGSRSRGTSS. Basic and acidic residues predominate over residues 79-91; the sequence is RGRDSRGGRRPES. Active-site residues include C376, H435, and D458. Ca(2+) contacts are provided by N498, D500, E547, and E552. Residues 791–815 are disordered; that stretch reads GSGFSDAGGDSRSGENIPMAYRGGA. S803 is subject to Phosphoserine.

Belongs to the transglutaminase superfamily. Transglutaminase family. In terms of assembly, interacts with PLAAT4. The cofactor is Ca(2+). Post-translationally, tyrosine-phosphorylated. In terms of processing, palmitoylated. The membrane anchorage region possesses a cluster of five cysteines within which fatty acid(s) may become thioester-linked. It is subject to phorbol ester-stimulated phosphorylation and is hypersensitive to proteolysis, which releases the enzyme in a soluble form. Expressed in large amounts in epithelial tissues (lung, liver and kidney).

It localises to the membrane. It catalyses the reaction L-glutaminyl-[protein] + L-lysyl-[protein] = [protein]-L-lysyl-N(6)-5-L-glutamyl-[protein] + NH4(+). Its function is as follows. Catalyzes the cross-linking of proteins and the conjugation of polyamines to proteins. Responsible for cross-linking epidermal proteins during formation of the stratum corneum. Involved in cell proliferation. This Mus musculus (Mouse) protein is Protein-glutamine gamma-glutamyltransferase K (Tgm1).